Reading from the N-terminus, the 381-residue chain is Homoserine O-succinyltransferase (381 aa).

One can recognise an AB hydrolase-1 domain in the interval 45 to 360; it reads NAVLVCHALN…PHGHDAFLLD (316 aa). Ser-151 serves as the catalytic Nucleophile. A substrate-binding site is contributed by Arg-221. Catalysis depends on residues Asp-321 and His-354. Asp-355 provides a ligand contact to substrate.

Belongs to the AB hydrolase superfamily. MetX family. In terms of assembly, homodimer.

Its subcellular location is the cytoplasm. The catalysed reaction is L-homoserine + succinyl-CoA = O-succinyl-L-homoserine + CoA. It participates in amino-acid biosynthesis; L-methionine biosynthesis via de novo pathway; O-succinyl-L-homoserine from L-homoserine: step 1/1. Its function is as follows. Transfers a succinyl group from succinyl-CoA to L-homoserine, forming succinyl-L-homoserine. This is Homoserine O-succinyltransferase from Burkholderia mallei (strain NCTC 10247).